Reading from the N-terminus, the 736-residue chain is Exo-oligoalginate lyase (736 aa).

The first 23 residues, 1 to 23 (MLSVNTIKNTLLAAVLVSVPATA), serve as a signal peptide directing secretion. Substrate is bound by residues lysine 136, 146–149 (QSLN), lysine 198, histidine 202, and 257–260 (YYQR). Tyrosine 258 acts as the Proton donor in catalysis. The Proton acceptor role is filled by histidine 413. Residues histidine 415 and aspartate 433 each contribute to the Zn(2+) site. Arginine 438 contacts substrate. Position 464 (histidine 464) interacts with Zn(2+). A substrate-binding site is contributed by glutamate 667.

The protein belongs to the polysaccharide lyase 17 family. In terms of assembly, homodimer. It depends on Zn(2+) as a cofactor.

It is found in the periplasm. It carries out the reaction Cleavage of 4-deoxy-alpha-L-erythro-hex-4-enopyranuronoside oligosaccharides into 4-deoxy-alpha-L-erythro-hex-4-enopyranuronate monosaccharides.. Its function is as follows. Catalyzes the depolymerization of alginate through an exolytic mode of action, via a beta-elimination mechanism. Preferentially acts on oligoalginates with degrees of polymerization higher than 2 to produce the alginate monomer, 4-deoxy-L-erythro-5-hexoseulose uronic acid. The protein is Exo-oligoalginate lyase of Saccharophagus degradans (strain 2-40 / ATCC 43961 / DSM 17024).